The sequence spans 180 residues: Large ribosomal subunit protein uL5 (180 aa).

Belongs to the universal ribosomal protein uL5 family. Part of the 50S ribosomal subunit; part of the 5S rRNA/L5/L18/L25 subcomplex. Contacts the 5S rRNA and the P site tRNA. Forms a bridge to the 30S subunit in the 70S ribosome.

In terms of biological role, this is one of the proteins that bind and probably mediate the attachment of the 5S RNA into the large ribosomal subunit, where it forms part of the central protuberance. In the 70S ribosome it contacts protein S13 of the 30S subunit (bridge B1b), connecting the 2 subunits; this bridge is implicated in subunit movement. Contacts the P site tRNA; the 5S rRNA and some of its associated proteins might help stabilize positioning of ribosome-bound tRNAs. The polypeptide is Large ribosomal subunit protein uL5 (Chlamydia felis (strain Fe/C-56) (Chlamydophila felis)).